We begin with the raw amino-acid sequence, 623 residues long: MIMTQEKKKFDAEVGKILNLMIHSLYSNKEIFMRELISNASDACDKLRYLSQSNSELVAGDSNFKITVKVDKDNGQIIIRDNGIGMNKDDLIENLGTIARSGTANFLKSLSGDSKKDNMLIGQFGVGFYSSFMVADKVTVTSRKAGEDKVHIWESDGLGEYTVSDSDKEFTRGTEIVLHIKKEEDTFLDHFRLKHIVKSYSDHIAVPIYFFDEAGNNEIQLNSASALWTRPKSEITEEQYKEFYKSLSYAVDDPWITMHNKNEGAIEFTNLLFIPSSKTFDLFHPDRKRRVKLYIKRVFISDENIDLIPSYLRFLRGVVDSEDLPLNISRESLQHNSVLEKIKNAITKRVLGELRKKKEESPEEYNKFWANFGGALKEGLCEATTDHEKLLEVCIFRSALHNKMISLDEYIANFKEGQSTIYYLSGDNPDKLLSSPQIEGLLSKEIDVLLFTDTVDDFWVNVNSKYKEHAIKSATRSDIDVEQTTSQSEEKNTDSKKSDDEYKLLTDYFKETLGELVKEVKISKKLTSSPACLAVSDAAMDIRMERFLIEQKQIANASAKNLELNPKNKIIEKIFNDLKANNKNNEELVNLIFDQACILEGEPVADTGAFSKRLNDIVQKAIL.

The segment at 1–330 (MIMTQEKKKF…SEDLPLNISR (330 aa)) is a; substrate-binding. The segment at 331 to 546 (ESLQHNSVLE…DAAMDIRMER (216 aa)) is b. A disordered region spans residues 477-497 (SDIDVEQTTSQSEEKNTDSKK). Basic and acidic residues predominate over residues 488–497 (SEEKNTDSKK). Residues 547-623 (FLIEQKQIAN…LNDIVQKAIL (77 aa)) form a c region.

It belongs to the heat shock protein 90 family. As to quaternary structure, homodimer.

The protein resides in the cytoplasm. Molecular chaperone. Has ATPase activity. This Rickettsia massiliae (strain Mtu5) protein is Chaperone protein HtpG.